The following is a 462-amino-acid chain: Glycine--tRNA ligase (462 aa).

Substrate-binding residues include Arg-101 and Glu-164. ATP-binding positions include 196-198 (RNE), 206-211 (FRTREF), 283-284 (EL), and 327-330 (GVDR). 211-215 (FEQME) provides a ligand contact to substrate. 323–327 (EPSAG) contributes to the substrate binding site.

It belongs to the class-II aminoacyl-tRNA synthetase family. As to quaternary structure, homodimer.

The protein localises to the cytoplasm. It catalyses the reaction tRNA(Gly) + glycine + ATP = glycyl-tRNA(Gly) + AMP + diphosphate. Its function is as follows. Catalyzes the attachment of glycine to tRNA(Gly). In Thermobifida fusca (strain YX), this protein is Glycine--tRNA ligase.